The following is a 484-amino-acid chain: MSDRIRVRYAPSPTGYLHIGNARTALFNYLYAKHYNGDFVIRIEDTDKKRNLEDGETSQFDNLKWLGLDWDESVDKDNGYGPYRQSERQHIYQPLIDQLLAEDKAYKCYMTEEELEAEREAQIARGEMPRYGGQHAHLTEEQRQQFEAEGRQPSIRFRVPQNQTYSFDDMVKGNISFDSNGIGDWVIVKKDGIPTYNFAVAIDDHYMQISDVIRGDDHISNTPKQIMIYEAFGWEPPRFGHMSLIVNEERKKLSKRDGQILQFIEQYRDLGYLPEALFNFIALLGWSPEGEEEIFSKEEFIKIFDEKRLSKSPAFFDKQKLAWVNNQYMKQKDTETVFQLALPHLIKANLIPEVPSEEDLSWGRKLIALYQKEMSYAGEIVPLSEMFFKEMPALGEEEQQVINGEQVPELMTHLFSKLEALEPFESAEIKKTIKEVQKETGIKGKQLFMPIRVAVTGQMHGPELPNTIEVLGKEKVLNRLKQYK.

A 'HIGH' region motif is present at residues 11 to 21 (PSPTGYLHIGN). The 'KMSKS' region signature appears at 252–256 (KLSKR). Lys-255 contributes to the ATP binding site.

Belongs to the class-I aminoacyl-tRNA synthetase family. Glutamate--tRNA ligase type 1 subfamily. In terms of assembly, monomer.

It localises to the cytoplasm. The catalysed reaction is tRNA(Glu) + L-glutamate + ATP = L-glutamyl-tRNA(Glu) + AMP + diphosphate. Catalyzes the attachment of glutamate to tRNA(Glu) in a two-step reaction: glutamate is first activated by ATP to form Glu-AMP and then transferred to the acceptor end of tRNA(Glu). This chain is Glutamate--tRNA ligase, found in Staphylococcus aureus (strain Newman).